We begin with the raw amino-acid sequence, 220 residues long: Phosphopantothenoylcysteine decarboxylase (220 aa).

Residues 29–31 (GSV) and 54–56 (TKA) contribute to the FMN site. His91 acts as the Proton donor in catalysis. Residues 107 to 110 (SANT) and Ala141 each bind FMN. N-[(R)-4-phosphopantothenoyl]-L-cysteine contacts are provided by Asn143, Arg173, and Ala175. Cys176 functions as the Proton donor in the catalytic mechanism. Residue Met184 coordinates N-[(R)-4-phosphopantothenoyl]-L-cysteine.

The protein belongs to the HFCD (homooligomeric flavin containing Cys decarboxylase) superfamily. In terms of assembly, forms homotrimers. Interacts with HIP1. Interacts with HD1 in the dark. FMN is required as a cofactor. Expressed in root meristem, shoot apical meristem (SAM), intercalary meristem, floral meristem, embryo and tip of the coleoptile before true leaf emergence.

Its subcellular location is the nucleus. The catalysed reaction is N-[(R)-4-phosphopantothenoyl]-L-cysteine + H(+) = (R)-4'-phosphopantetheine + CO2. It participates in cofactor biosynthesis; coenzyme A biosynthesis; CoA from (R)-pantothenate: step 3/5. In terms of biological role, catalyzes the decarboxylation of 4'-phosphopantothenoylcysteine to 4'-phosphopantetheine, a key step in coenzyme A biosynthesis. Involved in salt and osmotic tolerance, and light-regulated plant growth. Trimerization of HAL3 recruits and activates the E3 ubiquitin-protein ligase HIP1, which leads to the degradation of cell cycle suppressors, resulting in enhancement of cell division and plant growth. HAL3 function in cell division seems to be independent from its PPC decarboxylase activity. Acts as a positive regulator of flowering by binding to HD1 in the dark. In Oryza sativa subsp. japonica (Rice), this protein is Phosphopantothenoylcysteine decarboxylase.